The following is a 312-amino-acid chain: uncharacterized protein (312 aa).

It belongs to the asfivirus CP312R family.

The protein resides in the virion. This is an uncharacterized protein from African swine fever virus (strain Badajoz 1971 Vero-adapted) (Ba71V).